The following is a 113-amino-acid chain: Large ribosomal subunit protein uL22 (113 aa).

It belongs to the universal ribosomal protein uL22 family. Part of the 50S ribosomal subunit.

In terms of biological role, this protein binds specifically to 23S rRNA; its binding is stimulated by other ribosomal proteins, e.g. L4, L17, and L20. It is important during the early stages of 50S assembly. It makes multiple contacts with different domains of the 23S rRNA in the assembled 50S subunit and ribosome. Functionally, the globular domain of the protein is located near the polypeptide exit tunnel on the outside of the subunit, while an extended beta-hairpin is found that lines the wall of the exit tunnel in the center of the 70S ribosome. The protein is Large ribosomal subunit protein uL22 of Chloroflexus aggregans (strain MD-66 / DSM 9485).